The following is a 673-amino-acid chain: eEF1A lysine and N-terminal methyltransferase homolog (673 aa).

This sequence belongs to the methyltransferase superfamily.

The enzyme catalyses L-lysyl-[protein] + S-adenosyl-L-methionine = N(6)-methyl-L-lysyl-[protein] + S-adenosyl-L-homocysteine + H(+). It catalyses the reaction N(6)-methyl-L-lysyl-[protein] + S-adenosyl-L-methionine = N(6),N(6)-dimethyl-L-lysyl-[protein] + S-adenosyl-L-homocysteine + H(+). It carries out the reaction N-terminal glycyl-L-lysyl-L-glutamyl-[protein] + 3 S-adenosyl-L-methionine = N-terminal N,N,N-trimethyl-glycyl-L-lysyl-L-glutamyl-[protein] + 3 S-adenosyl-L-homocysteine + 3 H(+). In terms of biological role, dual methyltransferase. It catalyzes N-terminal methylation of target proteins via its C-terminus. It catalyzes dimethylation on lysine residues of target proteins via its N-terminus. The protein is eEF1A lysine and N-terminal methyltransferase homolog of Drosophila melanogaster (Fruit fly).